A 68-amino-acid polypeptide reads, in one-letter code: uncharacterized protein (68 aa).

Residues 1-27 are disordered; the sequence is MNEFEKWIEGRYEPHEQKQKEHEDTMG.

This is an uncharacterized protein from Bacillus subtilis (strain 168).